Consider the following 156-residue polypeptide: Large ribosomal subunit protein uL13 (156 aa).

It belongs to the universal ribosomal protein uL13 family. In terms of assembly, part of the 50S ribosomal subunit.

In terms of biological role, this protein is one of the early assembly proteins of the 50S ribosomal subunit, although it is not seen to bind rRNA by itself. It is important during the early stages of 50S assembly. This is Large ribosomal subunit protein uL13 from Archaeoglobus fulgidus (strain ATCC 49558 / DSM 4304 / JCM 9628 / NBRC 100126 / VC-16).